Here is a 612-residue protein sequence, read N- to C-terminus: Cytoplasmic dynein 1 intermediate chain 2 (612 aa).

Basic and acidic residues-rich tracts occupy residues 1 to 13 (MSDK…ELER) and 20 to 43 (QIRE…KKEA). Disordered regions lie at residues 1–117 (MSDK…MAKI) and 129–188 (TYTK…EEKQ). Serine 2 carries the post-translational modification N-acetylserine. Serine 51 carries the diphosphoserine modification. Serine 51 and serine 84 each carry phosphoserine. The span at 82-91 (PSSKSVSTPS) shows a compositional bias: low complexity. Threonine 89 is modified (phosphothreonine). A phosphoserine mark is found at serine 91, serine 95, and serine 98. Residues 164–188 (EKTLKKDEESDSKAPPHELTEEEKQ) are compositionally biased toward basic and acidic residues. 7 WD repeats span residues 251-300 (SKHR…TTPE), 304-344 (HCQS…RTPV), 353-394 (AHTH…HPQD), 403-443 (SKAV…AGIS), 448-493 (GHQG…PLYS), 496-536 (DNSD…EVPT), and 542-581 (EGNP…AVPR).

Belongs to the dynein intermediate chain family. Homodimer. The cytoplasmic dynein 1 complex consists of two catalytic heavy chains (HCs) and a number of non-catalytic subunits presented by intermediate chains (ICs), light intermediate chains (LICs) and light chains (LCs); the composition seems to vary in respect to the IC, LIC and LC composition. The heavy chain homodimer serves as a scaffold for the probable homodimeric assembly of the respective non-catalytic subunits. The ICs and LICs bind directly to the HC dimer and the LCs assemble on the IC dimer. Interacts with DYNLT3. Interacts with DYNLT1. Interacts (dephosphorylated at Ser-84) with DCTN1. Interacts with BICD2. Interacts with SPEF2. Interacts with CFAP61. The phosphorylation status of Ser-84 appears to be involved in dynactin-dependent target binding. In terms of processing, pyrophosphorylation by 5-diphosphoinositol pentakisphosphate (5-IP7) promotes interaction with DCTN1. Serine pyrophosphorylation is achieved by Mg(2+)-dependent, but enzyme independent transfer of a beta-phosphate from a inositol pyrophosphate to a pre-phosphorylated serine residue.

It localises to the cytoplasm. The protein localises to the cytoskeleton. In terms of biological role, acts as one of several non-catalytic accessory components of the cytoplasmic dynein 1 complex that are thought to be involved in linking dynein to cargos and to adapter proteins that regulate dynein function. Cytoplasmic dynein 1 acts as a motor for the intracellular retrograde motility of vesicles and organelles along microtubules. The intermediate chains mediate the binding of dynein to dynactin via its 150 kDa component (p150-glued) DCTN1. Involved in membrane-transport, such as Golgi apparatus, late endosomes and lysosomes. In Bos taurus (Bovine), this protein is Cytoplasmic dynein 1 intermediate chain 2 (DYNC1I2).